Here is a 211-residue protein sequence, read N- to C-terminus: uncharacterized protein (211 aa).

A signal peptide spans 1-20 (MSRVQISTVLAIDTATPAVT).

The protein to M.leprae ML0378.

This is an uncharacterized protein from Mycobacterium tuberculosis (strain CDC 1551 / Oshkosh).